Consider the following 154-residue polypeptide: NADPH-dependent 7-cyano-7-deazaguanine reductase (154 aa).

Residues 1-21 (MPNTDVSSLSMLGQQTETAQS) show a composition bias toward polar residues. Residues 1–28 (MPNTDVSSLSMLGQQTETAQSPEEAVLE) form a disordered region. Residue Cys52 is the Thioimide intermediate of the active site. The active-site Proton donor is Asp59. Substrate contacts are provided by residues 74–76 (VES) and 93–94 (HE).

It belongs to the GTP cyclohydrolase I family. QueF type 1 subfamily.

The protein resides in the cytoplasm. It catalyses the reaction 7-aminomethyl-7-carbaguanine + 2 NADP(+) = 7-cyano-7-deazaguanine + 2 NADPH + 3 H(+). It participates in tRNA modification; tRNA-queuosine biosynthesis. Catalyzes the NADPH-dependent reduction of 7-cyano-7-deazaguanine (preQ0) to 7-aminomethyl-7-deazaguanine (preQ1). This chain is NADPH-dependent 7-cyano-7-deazaguanine reductase, found in Rhizobium johnstonii (strain DSM 114642 / LMG 32736 / 3841) (Rhizobium leguminosarum bv. viciae).